Here is a 135-residue protein sequence, read N- to C-terminus: Large ribosomal subunit protein eL27x (135 aa).

It belongs to the eukaryotic ribosomal protein eL27 family.

In Arabidopsis thaliana (Mouse-ear cress), this protein is Large ribosomal subunit protein eL27x (RPL27C).